A 140-amino-acid chain; its full sequence is Putative pre-16S rRNA nuclease (140 aa).

The protein belongs to the YqgF nuclease family.

It is found in the cytoplasm. In terms of biological role, could be a nuclease involved in processing of the 5'-end of pre-16S rRNA. The protein is Putative pre-16S rRNA nuclease of Halalkalibacterium halodurans (strain ATCC BAA-125 / DSM 18197 / FERM 7344 / JCM 9153 / C-125) (Bacillus halodurans).